Here is a 375-residue protein sequence, read N- to C-terminus: Odorant receptor 49b (375 aa).

Residues 1–28 (MFEDIQLIYMNIKILRFWALLYDKNLRR) are Cytoplasmic-facing. Residues 29–49 (YVCIGLASFHIFTQIVYMMST) traverse the membrane as a helical segment. Topologically, residues 50–60 (NEGLTGIIRNS) are extracellular. Residues 61–77 (YMLVLWINTVLRAYLLL) traverse the membrane as a helical segment. The Cytoplasmic portion of the chain corresponds to 78–121 (ADHDRYLALIQKLTEAYYDLLNLNDSYISEILDQVNKVGKLMAR). The chain crosses the membrane as a helical span at residues 122-142 (GNLFFGMLTSMGFGLYPLSSS). Topologically, residues 143-176 (ERVLPFGSKIPGLNEYESPYYEMWYIFQMLITPM) are extracellular. The chain crosses the membrane as a helical span at residues 177 to 197 (GCCMYIPYTSLIVGLIMFGIV). Over 198-251 (RCKALQHRLRQVALKHPYGDRDPRELREEIIACIRYQQSIIEYMDHINELTTMM) the chain is Cytoplasmic. A helical transmembrane segment spans residues 252-272 (FLFELMAFSALLCALLFMLII). Topologically, residues 273–278 (VSGTSQ) are extracellular. The helical transmembrane segment at 279 to 299 (LIIVCMYINMILAQILALYWY) threads the bilayer. At 300-342 (ANELREQNLAVATAAYETEWFTFDVPLRKNILFMMMRAQRPAA) the chain is on the cytoplasmic side. A helical transmembrane segment spans residues 343–363 (ILLGNIRPITLELFQNLLNTT). Topologically, residues 364–375 (YTFFTVLKRVYG) are extracellular.

This sequence belongs to the insect chemoreceptor superfamily. Heteromeric odorant receptor channel (TC 1.A.69) family. Or30a subfamily. As to quaternary structure, interacts with Orco. Complexes exist early in the endomembrane system in olfactory sensory neurons (OSNs), coupling these complexes to the conserved ciliary trafficking pathway. As to expression, expressed in olfactory sensory neurons in the antenna.

It is found in the cell membrane. In terms of biological role, odorant receptor which mediates acceptance or avoidance behavior, depending on its substrates. The odorant receptor repertoire encodes a large collection of odor stimuli that vary widely in identity, intensity, and duration. May form a complex with Orco to form odorant-sensing units, providing sensitive and prolonged odorant signaling and calcium permeability. The polypeptide is Odorant receptor 49b (Or49b) (Drosophila melanogaster (Fruit fly)).